We begin with the raw amino-acid sequence, 281 residues long: NADH-cytochrome b5 reductase 1 (281 aa).

A helical transmembrane segment spans residues 2–22 (VPGKFIFTATFVLLCTIIAVV). The 105-residue stretch at 37-141 (EKLQEFPLVA…RGPKGFYHYQ (105 aa)) folds into the FAD-binding FR-type domain. Residues 121–136 (AQLN…GPKG) and 147–179 (EIGM…KVSL) contribute to the FAD site.

It belongs to the flavoprotein pyridine nucleotide cytochrome reductase family. In terms of assembly, monomer. Component of the 2-(3-amino-3-carboxypropyl)histidine synthase complex composed of DPH1, DPH2, DPH3 and a NADH-dependent reductase, predominantly CBR1. It depends on FAD as a cofactor.

The protein localises to the mitochondrion outer membrane. It catalyses the reaction 2 Fe(III)-[cytochrome b5] + NADH = 2 Fe(II)-[cytochrome b5] + NAD(+) + H(+). The catalysed reaction is 2 Fe(3+)-[Dph3] + NADH = 2 Fe(2+)-[Dph3] + NAD(+) + H(+). It participates in protein modification; peptidyl-diphthamide biosynthesis. Its function is as follows. NADH-dependent reductase for DPH3 and cytochrome b5. Required for the first step of diphthamide biosynthesis, a post-translational modification of histidine which occurs in elongation factor 2. DPH1 and DPH2 transfer a 3-amino-3-carboxypropyl (ACP) group from S-adenosyl-L-methionine (SAM) to a histidine residue, the reaction is assisted by a reduction system comprising DPH3 and a NADH-dependent reductase, predominantly CBR1. By reducing DPH3, also involved in the formation of the tRNA wobble base modification mcm5s 2U (5-methoxycarbonylmethyl-2-thiouridine), mediated by the elongator complex. The cytochrome b5/NADH cytochrome b5 reductase electron transfer system supports the catalytic activity of several sterol biosynthetic enzymes. The protein is NADH-cytochrome b5 reductase 1 (CBR1) of Kluyveromyces lactis (strain ATCC 8585 / CBS 2359 / DSM 70799 / NBRC 1267 / NRRL Y-1140 / WM37) (Yeast).